The primary structure comprises 303 residues: Acidic endochitinase WIN6.2B (303 aa).

An N-terminal signal peptide occupies residues 1 to 21 (MSVWAFAFFSLFLSLSVRGSA). One can recognise a Chitin-binding type-1 domain in the interval 22–62 (EQCGQQAGDALCPGGLCCSSYGWCGTTADYCGDGCQSQCDG). Disulfide bonds link C24-C39, C33-C45, C38-C52, and C56-C60. Residues 82–303 (DGYLSDIIPE…YGLLGLKDTM (222 aa)) are chitinase. E150 (proton donor) is an active-site residue. An intrachain disulfide couples C253 to C286.

It belongs to the glycosyl hydrolase 19 family. Chitinase class I subfamily.

The enzyme catalyses Random endo-hydrolysis of N-acetyl-beta-D-glucosaminide (1-&gt;4)-beta-linkages in chitin and chitodextrins.. Functionally, defense against chitin-containing fungal pathogens. This is Acidic endochitinase WIN6.2B from Populus trichocarpa (Western balsam poplar).